A 396-amino-acid polypeptide reads, in one-letter code: Unsaturated chondroitin disaccharide hydrolase (396 aa).

The active-site Nucleophile is the D113. 8 residues coordinate substrate: D113, D173, G231, T233, R245, W249, S363, and S366. The active-site Proton donor is D173.

This sequence belongs to the glycosyl hydrolase 88 family. In terms of assembly, monomer.

The catalysed reaction is beta-D-4-deoxy-Delta(4)-GlcpA-(1-&gt;3)-beta-D-GalpNAc6S + H2O = N-acetyl-beta-D-galactosamine 6-sulfate + 5-dehydro-4-deoxy-D-glucuronate. In terms of biological role, catalyzes the hydrolysis of unsaturated hyaluronate and chondroitin disaccharides. Also degrades unsaturated heparin disaccharides. Releases 4-deoxy-4,5-didehydro D-glucuronic acid or 4-deoxy-4,5-didehydro L-iduronic acid from chondroitin disaccharides, hyaluronan disaccharides and heparin disaccharides and cleaves both glycosidic (1-&gt;3) and (1-&gt;4) bonds. Prefers sulfated glycosaminoglycans compared to unsulfated glycosaminoglycans. Probably required for mammalian cells invasion through the degradation of extracellular sulfated glycosaminoglycans such as chondroitin and hyaluronan. This Streptococcus pneumoniae (strain ATCC BAA-255 / R6) protein is Unsaturated chondroitin disaccharide hydrolase (ugl).